The chain runs to 210 residues: Calcineurin B-like protein 4 (210 aa).

A lipid anchor (N-myristoyl glycine) is attached at glycine 2. EF-hand domains are found at residues 31–66, 67–102, 104–139, and 148–183; these read EVEA…RNSR, KANL…FHPK, PKSE…LLDE, and AVEA…NPAS. Aspartate 161, asparagine 163, aspartate 165, arginine 167, and glutamate 172 together coordinate Ca(2+).

The protein belongs to the calcineurin regulatory subunit family. Homodimer. Interacts with CIPK24. In terms of tissue distribution, expressed in leaves.

The protein localises to the cell membrane. Functionally, acts as a calcium sensor involved in the regulatory pathway for the control of intracellular Na(+) and K(+) homeostasis and salt tolerance. Operates in synergy with CIPK24 to activate the plasma membrane Na(+)/H(+) antiporter SOS1. May function as positive regulator of salt stress responses. CBL proteins interact with CIPK serine-threonine protein kinases. Binding of a CBL protein to the regulatory NAF domain of a CIPK protein lead to the activation of the kinase in a calcium-dependent manner. This chain is Calcineurin B-like protein 4 (CBL4), found in Oryza sativa subsp. japonica (Rice).